Reading from the N-terminus, the 722-residue chain is D-(-)-3-hydroxybutyrate oligomer hydrolase (722 aa).

Residues 1–11 (MQQRHLSQSAH) show a composition bias toward polar residues. The tract at residues 1–20 (MQQRHLSQSAHSHGHGTRRA) is disordered. An N-terminal signal peptide occupies residues 1 to 36 (MQQRHLSQSAHSHGHGTRRAHRRNTIAIAVATLAVA). Ser-327 functions as the Charge relay system in the catalytic mechanism. The interval 671–697 (PPSQVVRTTPRGGADTDTVGPRIQPSN) is disordered.

The protein belongs to the D-(-)-3-hydroxybutyrate oligomer hydrolase family.

The protein localises to the secreted. The catalysed reaction is (3R)-hydroxybutanoate dimer + H2O = 2 (R)-3-hydroxybutanoate + H(+). Its pathway is lipid metabolism; butanoate metabolism. Participates in the degradation of poly-3-hydroxybutyrate (PHB). It works downstream of poly(3-hydroxybutyrate) depolymerase, hydrolyzing D(-)-3-hydroxybutyrate oligomers of various length (3HB-oligomers) into 3HB-monomers. The chain is D-(-)-3-hydroxybutyrate oligomer hydrolase from Cupriavidus metallidurans (strain ATCC 43123 / DSM 2839 / NBRC 102507 / CH34) (Ralstonia metallidurans).